Reading from the N-terminus, the 314-residue chain is DNA-directed RNA polymerase subunit alpha (314 aa).

Residues 1 to 228 (MIEIEKPNIE…EHLNIFVGLT (228 aa)) are alpha N-terminal domain (alpha-NTD). The segment at 245–314 (KEKVLEMTIE…ELGLGLRNEE (70 aa)) is alpha C-terminal domain (alpha-CTD).

Belongs to the RNA polymerase alpha chain family. In terms of assembly, homodimer. The RNAP catalytic core consists of 2 alpha, 1 beta, 1 beta' and 1 omega subunit. When a sigma factor is associated with the core the holoenzyme is formed, which can initiate transcription.

The catalysed reaction is RNA(n) + a ribonucleoside 5'-triphosphate = RNA(n+1) + diphosphate. Functionally, DNA-dependent RNA polymerase catalyzes the transcription of DNA into RNA using the four ribonucleoside triphosphates as substrates. This is DNA-directed RNA polymerase subunit alpha from Shouchella clausii (strain KSM-K16) (Alkalihalobacillus clausii).